Reading from the N-terminus, the 136-residue chain is 5-hydroxyisourate hydrolase (136 aa).

Residues 1–20 form the signal peptide; that stretch reads MKRYILATAIASLVAAPAMA. Substrate-binding residues include H31, R69, and Y133.

Belongs to the transthyretin family. 5-hydroxyisourate hydrolase subfamily. In terms of assembly, homotetramer.

It localises to the periplasm. The catalysed reaction is 5-hydroxyisourate + H2O = 5-hydroxy-2-oxo-4-ureido-2,5-dihydro-1H-imidazole-5-carboxylate + H(+). In terms of biological role, catalyzes the hydrolysis of 5-hydroxyisourate (HIU) to 2-oxo-4-hydroxy-4-carboxy-5-ureidoimidazoline (OHCU). This chain is 5-hydroxyisourate hydrolase (hiuH), found in Salmonella typhi.